The chain runs to 311 residues: Ribose-5-phosphate isomerase (311 aa).

A compositionally biased stretch (gly residues) spans 22 to 32 (AGGAASGGGGN). The segment at 22–67 (AGGAASGGGGNSWDLPGSHVRLPGRAQSGTRGGAGNTSTSCGDSNS) is disordered. The residue at position 52 (R52) is an Omega-N-methylarginine. Residues 57–67 (NTSTSCGDSNS) are compositionally biased toward polar residues. S106 carries the phosphoserine modification.

The protein belongs to the ribose 5-phosphate isomerase family.

The enzyme catalyses aldehydo-D-ribose 5-phosphate = D-ribulose 5-phosphate. The protein operates within carbohydrate degradation; pentose phosphate pathway; D-ribose 5-phosphate from D-ribulose 5-phosphate (non-oxidative stage): step 1/1. Its function is as follows. Catalyzes the reversible conversion of ribose-5-phosphate to ribulose 5-phosphate and participates in the first step of the non-oxidative branch of the pentose phosphate pathway. This Homo sapiens (Human) protein is Ribose-5-phosphate isomerase.